The primary structure comprises 359 residues: Gap junction alpha-5 protein (359 aa).

Residues 1 to 19 (MGDWSFLGEFLEEVHKHST) are Cytoplasmic-facing. The helical transmembrane segment at 20–40 (VIGKVWLTVLFIFRMLVLGTA) threads the bilayer. The Extracellular segment spans residues 41 to 76 (AESSWGDEQADFLCDTMQPGCENVCYDQAFPISHIR). The chain crosses the membrane as a helical span at residues 77–97 (YWVLQVIFVSTPSLVYLGHAV). Over 98–165 (HMVRVQEKRK…CSILIRTTME (68 aa)) the chain is Cytoplasmic. Residues 166–186 (VAFIVGQYLLYGVFLDTLHVC) traverse the membrane as a helical segment. Topologically, residues 187 to 206 (RRSPCPHPVNCYVSRPTEKN) are extracellular. The helical transmembrane segment at 207-227 (VFIVFMLAVAGLSLFLSLAEL) threads the bilayer. Over 228 to 359 (YHLGWKKIRQ…SKARSDDLSV (132 aa)) the chain is Cytoplasmic. 2 disordered regions span residues 285-305 (SNKM…VRSQ) and 317-359 (RYAQ…DLSV). Phosphoserine occurs at positions 354 and 358.

Belongs to the connexin family. Alpha-type (group II) subfamily. As to quaternary structure, a connexon is composed of a hexamer of connexins.

The protein resides in the cell membrane. It is found in the cell junction. The protein localises to the gap junction. One gap junction consists of a cluster of closely packed pairs of transmembrane channels, the connexons, through which materials of low MW diffuse from one cell to a neighboring cell. This chain is Gap junction alpha-5 protein (GJA5), found in Bos taurus (Bovine).